The primary structure comprises 737 residues: Lysyl oxidase homolog 2A (737 aa).

A signal peptide spans 1 to 18 (MAVSSALCIFSLLVLAQA). SRCR domains lie at 29 to 130 (LRLA…VICN), 159 to 270 (IRPI…VSCV), 294 to 393 (VRLR…VRCN), and 403 to 512 (IRLS…VSCS). Cystine bridges form between Cys-55–Cys-119, Cys-68–Cys-129, Cys-99–Cys-109, Cys-188–Cys-259, Cys-201–Cys-269, Cys-235–Cys-245, Cys-319–Cys-382, Cys-332–Cys-392, and Cys-363–Cys-373. The N-linked (GlcNAc...) asparagine glycan is linked to Asn-256. Asn-423 is a glycosylation site (N-linked (GlcNAc...) asparagine). Intrachain disulfides connect Cys-432-Cys-498, Cys-445-Cys-511, and Cys-479-Cys-489. The segment at 516–718 (PDLVLNAQLV…WTYSCHIGGS (203 aa)) is lysyl-oxidase like. Asp-517 and Leu-518 together coordinate Ca(2+). Cystine bridges form between Cys-541-Cys-592, Cys-547-Cys-662, Cys-624-Cys-640, and Cys-630-Cys-652. 3 residues coordinate Cu cation: His-593, His-595, and His-597. The N-linked (GlcNAc...) asparagine glycan is linked to Asn-611. Residues 620–656 (KASFCLEDTHCDEGISKRYHCANFGEQGITVGCWDTY) constitute a cross-link (lysine tyrosylquinone (Lys-Tyr)). Tyr-656 is modified (2',4',5'-topaquinone). Ca(2+) contacts are provided by Glu-689, Asp-691, Asn-694, and Asn-695. A disulfide bridge connects residues Cys-699 and Cys-713.

This sequence belongs to the lysyl oxidase family. Requires Cu cation as cofactor. It depends on lysine tyrosylquinone residue as a cofactor. The lysine tyrosylquinone cross-link (LTQ) is generated by condensation of the epsilon-amino group of a lysine with a topaquinone produced by oxidation of tyrosine.

It is found in the secreted. It localises to the extracellular space. Its subcellular location is the extracellular matrix. The protein resides in the basement membrane. The protein localises to the nucleus. It is found in the chromosome. It localises to the endoplasmic reticulum. The catalysed reaction is L-lysyl-[protein] + O2 + H2O = (S)-2-amino-6-oxohexanoyl-[protein] + H2O2 + NH4(+). Functionally, mediates the post-translational oxidative deamination of lysine residues on target proteins leading to the formation of deaminated lysine (allysine). Acts as a transcription corepressor and specifically mediates deamination of trimethylated 'Lys-4' of histone H3 (H3K4me3), a specific tag for epigenetic transcriptional activation. Shows no activity against histone H3 when it is trimethylated on 'Lys-9' (H3K9me3) or 'Lys-27' (H3K27me3) or when 'Lys-4' is monomethylated (H3K4me1) or dimethylated (H3K4me2). Also mediates deamination of methylated TAF10, a member of the transcription factor IID (TFIID) complex, which induces release of TAF10 from promoters, leading to inhibition of TFIID-dependent transcription. LOXL2-mediated deamination of TAF10 results in transcriptional repression of genes required for embryonic stem cell pluripotency. Involved in epithelial to mesenchymal transition (EMT) and participates in repression of E-cadherin, probably by mediating deamination of histone H3. When secreted into the extracellular matrix, promotes cross-linking of extracellular matrix proteins by mediating oxidative deamination of peptidyl lysine residues in precursors to fibrous collagen and elastin. Acts as a regulator of sprouting angiogenesis, probably via collagen IV scaffolding. Acts as a regulator of chondrocyte differentiation, probably by regulating expression of factors that control chondrocyte differentiation. Required with loxl2b for correct expression of Sox2 and for neural differentiation. This Danio rerio (Zebrafish) protein is Lysyl oxidase homolog 2A (loxl2a).